A 314-amino-acid chain; its full sequence is 2,3-dihydroxyphenylpropionate/2,3-dihydroxicinnamic acid 1,2-dioxygenase (314 aa).

The active-site Proton donor is the histidine 115. Histidine 179 acts as the Proton acceptor in catalysis.

The protein belongs to the LigB/MhpB extradiol dioxygenase family. Homotetramer. Fe(2+) serves as cofactor.

The enzyme catalyses 3-(2,3-dihydroxyphenyl)propanoate + O2 = (2Z,4E)-2-hydroxy-6-oxonona-2,4-dienedioate + H(+). It carries out the reaction (2E)-3-(2,3-dihydroxyphenyl)prop-2-enoate + O2 = (2Z,4E,7E)-2-hydroxy-6-oxonona-2,4,7-trienedioate + H(+). It functions in the pathway aromatic compound metabolism; 3-phenylpropanoate degradation. In terms of biological role, catalyzes the non-heme iron(II)-dependent oxidative cleavage of 2,3-dihydroxyphenylpropionic acid and 2,3-dihydroxicinnamic acid into 2-hydroxy-6-ketononadienedioate and 2-hydroxy-6-ketononatrienedioate, respectively. This Escherichia coli (strain 55989 / EAEC) protein is 2,3-dihydroxyphenylpropionate/2,3-dihydroxicinnamic acid 1,2-dioxygenase.